Reading from the N-terminus, the 416-residue chain is Gamma-glutamyl phosphate reductase (416 aa).

It belongs to the gamma-glutamyl phosphate reductase family.

The protein localises to the cytoplasm. The enzyme catalyses L-glutamate 5-semialdehyde + phosphate + NADP(+) = L-glutamyl 5-phosphate + NADPH + H(+). The protein operates within amino-acid biosynthesis; L-proline biosynthesis; L-glutamate 5-semialdehyde from L-glutamate: step 2/2. Catalyzes the NADPH-dependent reduction of L-glutamate 5-phosphate into L-glutamate 5-semialdehyde and phosphate. The product spontaneously undergoes cyclization to form 1-pyrroline-5-carboxylate. This is Gamma-glutamyl phosphate reductase from Halalkalibacterium halodurans (strain ATCC BAA-125 / DSM 18197 / FERM 7344 / JCM 9153 / C-125) (Bacillus halodurans).